The chain runs to 715 residues: Polyribonucleotide nucleotidyltransferase (715 aa).

Mg(2+) contacts are provided by Asp493 and Asp499. Positions 560 to 619 constitute a KH domain; the sequence is PRMITIKINPEKIRDVIGKGGSVIRALTEETGTTIDISDDGVVTIASTSSEGMAEAKKRI. Residues 629–697 form the S1 motif domain; sequence GQVYEGTVLK…EKGRVRLSAK (69 aa).

The protein belongs to the polyribonucleotide nucleotidyltransferase family. Mg(2+) serves as cofactor.

It localises to the cytoplasm. It carries out the reaction RNA(n+1) + phosphate = RNA(n) + a ribonucleoside 5'-diphosphate. Its function is as follows. Involved in mRNA degradation. Catalyzes the phosphorolysis of single-stranded polyribonucleotides processively in the 3'- to 5'-direction. The sequence is that of Polyribonucleotide nucleotidyltransferase from Burkholderia vietnamiensis (strain G4 / LMG 22486) (Burkholderia cepacia (strain R1808)).